A 156-amino-acid chain; its full sequence is Snaclec A2 (156 aa).

The first 23 residues, 1–23, serve as a signal peptide directing secretion; that stretch reads MGRLISVSFGLLVVFLSLSGTGA. 3 disulfides stabilise this stretch: C27–C38, C55–C154, and C129–C146. The 122-residue stretch at 34–155 folds into the C-type lectin domain; it reads HEGHCYKVFN…CGQPYRFTCE (122 aa).

It belongs to the snaclec family. As to quaternary structure, heterodimer; disulfide-linked. In terms of tissue distribution, expressed by the venom gland.

The protein resides in the secreted. Its function is as follows. Interferes with one step of hemostasis (modulation of platelet aggregation, or coagulation cascade, for example). The polypeptide is Snaclec A2 (Macrovipera lebetinus (Levantine viper)).